Here is a 186-residue protein sequence, read N- to C-terminus: Translation initiation factor IF-3 (186 aa).

This sequence belongs to the IF-3 family. Monomer.

It localises to the cytoplasm. In terms of biological role, IF-3 binds to the 30S ribosomal subunit and shifts the equilibrium between 70S ribosomes and their 50S and 30S subunits in favor of the free subunits, thus enhancing the availability of 30S subunits on which protein synthesis initiation begins. This chain is Translation initiation factor IF-3, found in Borrelia garinii subsp. bavariensis (strain ATCC BAA-2496 / DSM 23469 / PBi) (Borreliella bavariensis).